We begin with the raw amino-acid sequence, 75 residues long: uncharacterized protein (75 aa).

Residues 7 to 26 traverse the membrane as a helical segment; it reads ATAPLFVIVGLAVVLTGATG.

Its subcellular location is the membrane. This is an uncharacterized protein from Dictyostelium discoideum (Social amoeba).